Consider the following 107-residue polypeptide: Large ribosomal subunit protein uL24 (107 aa).

Belongs to the universal ribosomal protein uL24 family. Part of the 50S ribosomal subunit.

In terms of biological role, one of two assembly initiator proteins, it binds directly to the 5'-end of the 23S rRNA, where it nucleates assembly of the 50S subunit. Its function is as follows. One of the proteins that surrounds the polypeptide exit tunnel on the outside of the subunit. This chain is Large ribosomal subunit protein uL24, found in Kosmotoga olearia (strain ATCC BAA-1733 / DSM 21960 / TBF 19.5.1).